The sequence spans 219 residues: Translation initiation factor IF-3 (219 aa).

Belongs to the IF-3 family. In terms of assembly, monomer.

The protein resides in the cytoplasm. Functionally, IF-3 binds to the 30S ribosomal subunit and shifts the equilibrium between 70S ribosomes and their 50S and 30S subunits in favor of the free subunits, thus enhancing the availability of 30S subunits on which protein synthesis initiation begins. The chain is Translation initiation factor IF-3 from Prochlorococcus marinus (strain MIT 9313).